A 668-amino-acid polypeptide reads, in one-letter code: DNA ligase (668 aa).

NAD(+)-binding positions include 34–38 (DAEYD), 83–84 (SL), and Glu117. Residue Lys119 is the N6-AMP-lysine intermediate of the active site. The NAD(+) site is built by Arg140, Glu177, Lys293, and Lys317. Positions 411, 414, 429, and 434 each coordinate Zn(2+). The BRCT domain occupies 591 to 668 (RVGGRFTGKT…SEDDFLELMQ (78 aa)).

This sequence belongs to the NAD-dependent DNA ligase family. LigA subfamily. Mg(2+) is required as a cofactor. Mn(2+) serves as cofactor.

It catalyses the reaction NAD(+) + (deoxyribonucleotide)n-3'-hydroxyl + 5'-phospho-(deoxyribonucleotide)m = (deoxyribonucleotide)n+m + AMP + beta-nicotinamide D-nucleotide.. Its function is as follows. DNA ligase that catalyzes the formation of phosphodiester linkages between 5'-phosphoryl and 3'-hydroxyl groups in double-stranded DNA using NAD as a coenzyme and as the energy source for the reaction. It is essential for DNA replication and repair of damaged DNA. In Citrifermentans bemidjiense (strain ATCC BAA-1014 / DSM 16622 / JCM 12645 / Bem) (Geobacter bemidjiensis), this protein is DNA ligase.